We begin with the raw amino-acid sequence, 258 residues long: Imidazole glycerol phosphate synthase subunit HisF (258 aa).

Residues aspartate 11 and aspartate 130 contribute to the active site.

It belongs to the HisA/HisF family. As to quaternary structure, heterodimer of HisH and HisF.

It localises to the cytoplasm. It carries out the reaction 5-[(5-phospho-1-deoxy-D-ribulos-1-ylimino)methylamino]-1-(5-phospho-beta-D-ribosyl)imidazole-4-carboxamide + L-glutamine = D-erythro-1-(imidazol-4-yl)glycerol 3-phosphate + 5-amino-1-(5-phospho-beta-D-ribosyl)imidazole-4-carboxamide + L-glutamate + H(+). It functions in the pathway amino-acid biosynthesis; L-histidine biosynthesis; L-histidine from 5-phospho-alpha-D-ribose 1-diphosphate: step 5/9. IGPS catalyzes the conversion of PRFAR and glutamine to IGP, AICAR and glutamate. The HisF subunit catalyzes the cyclization activity that produces IGP and AICAR from PRFAR using the ammonia provided by the HisH subunit. In Shigella dysenteriae serotype 1 (strain Sd197), this protein is Imidazole glycerol phosphate synthase subunit HisF.